We begin with the raw amino-acid sequence, 397 residues long: Pectate lyase (397 aa).

Residues 1–25 form the signal peptide; the sequence is MDVYRIRISVFFLLVLLTFAALTTA. Asparagine 134 carries an N-linked (GlcNAc...) asparagine glycan. Ca(2+) is bound by residues aspartate 191, aspartate 216, and aspartate 220. N-linked (GlcNAc...) asparagine glycosylation is present at asparagine 227. Residue arginine 272 is part of the active site.

It belongs to the polysaccharide lyase 1 family. Ca(2+) is required as a cofactor.

It carries out the reaction Eliminative cleavage of (1-&gt;4)-alpha-D-galacturonan to give oligosaccharides with 4-deoxy-alpha-D-galact-4-enuronosyl groups at their non-reducing ends.. Its pathway is glycan metabolism; pectin degradation; 2-dehydro-3-deoxy-D-gluconate from pectin: step 2/5. The sequence is that of Pectate lyase from Nicotiana tabacum (Common tobacco).